Consider the following 336-residue polypeptide: MRILVTGGAGFIGSEFVRATLRGTLPGSSGTQVTVLDKLTYSGNVLNLAPIADLRNYRFVRGDICDQDLVDDVVAGHDAIVHFAAETHVDRSIGSAASFVRTNAMGTQVLLEAASRHRLGRFVHISTDEVYGSIPEGAWDEESPVAPNAPYAAAKAAGDLLALAWHRTHGLDVVVTRCTNNYGPYQYPEKLIPLFTTNVMDGQQVPVYGEGHNRRQWLHVSDHCRAIQLVLLGGRAGEVYHIGGGTELTNLELAEQILKSCGAGWDMVRHVPDRPGHDFRYSLDTTKIRTELGFSPRVAFADGLVETVEWYRDNRAWWEPLKSPDEATGSPGDAGR.

NAD(+)-binding positions include G7 to G13, D37 to T40, and D63 to I64. Substrate is bound at residue T87. T102 serves as a coordination point for NAD(+). Residue T127–E129 participates in substrate binding. The active-site Proton donor is D128. Active-site proton acceptor residues include E129 and Y151. Y151–K155 contacts NAD(+). N180 is a binding site for substrate. N181 is a binding site for NAD(+). Substrate is bound by residues K190–L191, P206–Y208, R215, N250, and R274–H277.

Belongs to the NAD(P)-dependent epimerase/dehydratase family. dTDP-glucose dehydratase subfamily. As to quaternary structure, homodimer. The cofactor is NAD(+).

It carries out the reaction dTDP-alpha-D-glucose = dTDP-4-dehydro-6-deoxy-alpha-D-glucose + H2O. It functions in the pathway antibiotic biosynthesis; novobiocin biosynthesis. Functionally, dTDP-glucose 4,6-dehydratase involved in the generation of the deoxysugar in the novobiocin biosynthesis pathway, an aminocoumarin family antibiotic that targets bacterial DNA gyrases. This Streptomyces niveus (Streptomyces spheroides) protein is dTDP-glucose 4,6-dehydratase (novT).